The chain runs to 297 residues: Ribosomal protein L11 methyltransferase (297 aa).

S-adenosyl-L-methionine-binding residues include T152, G173, D195, and N234.

The protein belongs to the methyltransferase superfamily. PrmA family.

Its subcellular location is the cytoplasm. The enzyme catalyses L-lysyl-[protein] + 3 S-adenosyl-L-methionine = N(6),N(6),N(6)-trimethyl-L-lysyl-[protein] + 3 S-adenosyl-L-homocysteine + 3 H(+). Its function is as follows. Methylates ribosomal protein L11. The chain is Ribosomal protein L11 methyltransferase from Cupriavidus taiwanensis (strain DSM 17343 / BCRC 17206 / CCUG 44338 / CIP 107171 / LMG 19424 / R1) (Ralstonia taiwanensis (strain LMG 19424)).